We begin with the raw amino-acid sequence, 599 residues long: Elongation factor 4 (599 aa).

Residues 2–184 (KNIRNFSIIA…RLVRDIPPPQ (183 aa)) form the tr-type G domain. GTP is bound by residues 14-19 (DHGKST) and 131-134 (NKID).

The protein belongs to the TRAFAC class translation factor GTPase superfamily. Classic translation factor GTPase family. LepA subfamily.

Its subcellular location is the cell inner membrane. It catalyses the reaction GTP + H2O = GDP + phosphate + H(+). Functionally, required for accurate and efficient protein synthesis under certain stress conditions. May act as a fidelity factor of the translation reaction, by catalyzing a one-codon backward translocation of tRNAs on improperly translocated ribosomes. Back-translocation proceeds from a post-translocation (POST) complex to a pre-translocation (PRE) complex, thus giving elongation factor G a second chance to translocate the tRNAs correctly. Binds to ribosomes in a GTP-dependent manner. The protein is Elongation factor 4 of Salmonella paratyphi A (strain ATCC 9150 / SARB42).